Reading from the N-terminus, the 206-residue chain is dITP/XTP pyrophosphatase (206 aa).

Residue 7 to 12 coordinates substrate; the sequence is SSHGYK. Catalysis depends on Asp-70, which acts as the Proton acceptor. Asp-70 contributes to the Mg(2+) binding site. Substrate-binding positions include Thr-71, 154–157, Lys-177, and 182–183; these read FGYD and HR.

The protein belongs to the HAM1 NTPase family. Homodimer. Requires Mg(2+) as cofactor.

The catalysed reaction is XTP + H2O = XMP + diphosphate + H(+). The enzyme catalyses dITP + H2O = dIMP + diphosphate + H(+). It carries out the reaction ITP + H2O = IMP + diphosphate + H(+). Pyrophosphatase that catalyzes the hydrolysis of nucleoside triphosphates to their monophosphate derivatives, with a high preference for the non-canonical purine nucleotides XTP (xanthosine triphosphate), dITP (deoxyinosine triphosphate) and ITP. Seems to function as a house-cleaning enzyme that removes non-canonical purine nucleotides from the nucleotide pool, thus preventing their incorporation into DNA/RNA and avoiding chromosomal lesions. This chain is dITP/XTP pyrophosphatase, found in Chlamydia abortus (strain DSM 27085 / S26/3) (Chlamydophila abortus).